Reading from the N-terminus, the 107-residue chain is UPF0145 protein YbjQ (107 aa).

It belongs to the UPF0145 family.

This is UPF0145 protein YbjQ from Escherichia coli O139:H28 (strain E24377A / ETEC).